The chain runs to 664 residues: Putative peroxisomal acyl-coenzyme A oxidase 1.2 (664 aa).

399–404 (CGGHGY) serves as a coordination point for FAD. Positions 662–664 (AKL) match the Microbody targeting signal motif.

It belongs to the acyl-CoA oxidase family. The cofactor is FAD.

The protein localises to the peroxisome. It catalyses the reaction a 2,3-saturated acyl-CoA + O2 = a (2E)-enoyl-CoA + H2O2. In terms of biological role, catalyzes the desaturation of acyl-CoAs to 2-trans-enoyl-CoAs. The protein is Putative peroxisomal acyl-coenzyme A oxidase 1.2 (ACX1.2) of Arabidopsis thaliana (Mouse-ear cress).